Consider the following 189-residue polypeptide: Ras-like protein 1 (189 aa).

10–17 (GAGGVGKS) contacts GTP. The short motif at 32–40 (YDPTIEDSY) is the Effector region element. Residues 57 to 61 (DTAGQ) and 116 to 119 (NKCD) each bind GTP. C186 carries the post-translational modification Cysteine methyl ester. C186 carries S-geranylgeranyl cysteine lipidation. The propeptide at 187 to 189 (KML) is removed in mature form.

The protein belongs to the small GTPase superfamily. Ras family.

The protein localises to the cell membrane. It carries out the reaction GTP + H2O = GDP + phosphate + H(+). Alternates between an inactive form bound to GDP and an active form bound to GTP. Activated by a guanine nucleotide-exchange factor (GEF) and inactivated by a GTPase-activating protein (GAP). In terms of biological role, ras proteins bind GDP/GTP and possess intrinsic GTPase activity. Plays a role in eye development by regulating cell growth, survival of postmitotic ommatidial cells and differentiation of photoreceptor cells. During larval development, mediates Ptth/tor signaling leading to the production of ecdysone, a hormone required for the initiation of metamorphosis. The polypeptide is Ras-like protein 1 (Drosophila ananassae (Fruit fly)).